The primary structure comprises 435 residues: Serine--tRNA ligase (435 aa).

242–244 (TAE) serves as a coordination point for L-serine. 273 to 275 (RSE) contributes to the ATP binding site. Glu-296 is an L-serine binding site. Residue 360–363 (EISS) coordinates ATP. Ser-396 contributes to the L-serine binding site.

Belongs to the class-II aminoacyl-tRNA synthetase family. Type-1 seryl-tRNA synthetase subfamily. As to quaternary structure, homodimer. The tRNA molecule binds across the dimer.

The protein localises to the cytoplasm. It carries out the reaction tRNA(Ser) + L-serine + ATP = L-seryl-tRNA(Ser) + AMP + diphosphate + H(+). The enzyme catalyses tRNA(Sec) + L-serine + ATP = L-seryl-tRNA(Sec) + AMP + diphosphate + H(+). The protein operates within aminoacyl-tRNA biosynthesis; selenocysteinyl-tRNA(Sec) biosynthesis; L-seryl-tRNA(Sec) from L-serine and tRNA(Sec): step 1/1. In terms of biological role, catalyzes the attachment of serine to tRNA(Ser). Is also able to aminoacylate tRNA(Sec) with serine, to form the misacylated tRNA L-seryl-tRNA(Sec), which will be further converted into selenocysteinyl-tRNA(Sec). This is Serine--tRNA ligase from Vibrio parahaemolyticus serotype O3:K6 (strain RIMD 2210633).